Here is a 158-residue protein sequence, read N- to C-terminus: Class 10 plant pathogenesis-related protein 2A (158 aa).

Asp8 is a binding site for trans-zeatin. Ca(2+) is bound by residues Pro32, Val35, and Ile38. Positions 60, 69, 81, and 83 each coordinate trans-zeatin.

It belongs to the BetVI family.

It is found in the cytoplasm. Its subcellular location is the cytosol. Class II ribonuclease (RNase). Binds to cytokinins. Interacts with melatonin. This chain is Class 10 plant pathogenesis-related protein 2A, found in Lupinus luteus (European yellow lupine).